The primary structure comprises 663 residues: UvrABC system protein B (663 aa).

The Helicase ATP-binding domain maps to 31–188; sequence DNIEGGEKAQ…NDLVDIQFER (158 aa). 44–51 provides a ligand contact to ATP; sequence GATGTGKT. The Beta-hairpin motif lies at 97 to 120; it reads YYDYYQPEAYVPSSDTYIEKDSSV. Positions 435–601 constitute a Helicase C-terminal domain; the sequence is QMDDLLGEIN…TIKKDIRDLI (167 aa). The UVR domain occupies 627–662; the sequence is QEAIKKLQKQMQEAAELLDFELAAQIRDMVLELKAM.

The protein belongs to the UvrB family. As to quaternary structure, forms a heterotetramer with UvrA during the search for lesions. Interacts with UvrC in an incision complex.

It localises to the cytoplasm. The UvrABC repair system catalyzes the recognition and processing of DNA lesions. A damage recognition complex composed of 2 UvrA and 2 UvrB subunits scans DNA for abnormalities. Upon binding of the UvrA(2)B(2) complex to a putative damaged site, the DNA wraps around one UvrB monomer. DNA wrap is dependent on ATP binding by UvrB and probably causes local melting of the DNA helix, facilitating insertion of UvrB beta-hairpin between the DNA strands. Then UvrB probes one DNA strand for the presence of a lesion. If a lesion is found the UvrA subunits dissociate and the UvrB-DNA preincision complex is formed. This complex is subsequently bound by UvrC and the second UvrB is released. If no lesion is found, the DNA wraps around the other UvrB subunit that will check the other stand for damage. In Streptococcus mutans serotype c (strain ATCC 700610 / UA159), this protein is UvrABC system protein B.